The primary structure comprises 169 residues: Peptide deformylase (169 aa).

Fe cation contacts are provided by Cys91 and His133. The active site involves Glu134. His137 is a binding site for Fe cation.

Belongs to the polypeptide deformylase family. It depends on Fe(2+) as a cofactor.

It carries out the reaction N-terminal N-formyl-L-methionyl-[peptide] + H2O = N-terminal L-methionyl-[peptide] + formate. In terms of biological role, removes the formyl group from the N-terminal Met of newly synthesized proteins. Requires at least a dipeptide for an efficient rate of reaction. N-terminal L-methionine is a prerequisite for activity but the enzyme has broad specificity at other positions. The sequence is that of Peptide deformylase from Shigella boydii serotype 18 (strain CDC 3083-94 / BS512).